Here is a 981-residue protein sequence, read N- to C-terminus: Rab3 GTPase-activating protein catalytic subunit (981 aa).

Phosphoserine is present on residues serine 83, serine 379, serine 537, serine 579, serine 581, and serine 590. Residues 592–613 (TEELKGNGQESGKKGGPKEMAN) are disordered. At serine 664 the chain carries Phosphoserine. Threonine 908 carries the phosphothreonine modification. Residues 908 to 937 (TPPEEELKRMGSPEERRQNSVSDFPPPAGR) are disordered. The segment covering 912-925 (EELKRMGSPEERRQ) has biased composition (basic and acidic residues).

It belongs to the Rab3-GAP catalytic subunit family. In terms of assembly, the Rab3 GTPase-activating complex is a heterodimer composed of RAB3GAP1 and RAB3GAP2. The Rab3 GTPase-activating complex interacts with DMXL2. Interacts with LMAN1. As to expression, ubiquitous.

It localises to the cytoplasm. The protein resides in the endoplasmic reticulum. It is found in the golgi apparatus. Its subcellular location is the cis-Golgi network. In terms of biological role, catalytic subunit of the Rab3 GTPase-activating (Rab3GAP) complex composed of RAB3GAP1 and RAB3GAP2, which has GTPase-activating protein (GAP) activity towards various Rab3 subfamily members (RAB3A, RAB3B, RAB3C and RAB3D), RAB5A and RAB43, and guanine nucleotide exchange factor (GEF) activity towards RAB18. As part of the Rab3GAP complex, acts as a GAP for Rab3 proteins by converting active RAB3-GTP to the inactive form RAB3-GDP. Rab3 proteins are involved in regulated exocytosis of neurotransmitters and hormones. The Rab3GAP complex, acts as a GEF for RAB18 by promoting the conversion of inactive RAB18-GDP to the active form RAB18-GTP. Recruits and stabilizes RAB18 at the cis-Golgi membrane in fibroblasts where RAB18 is most likely activated. Also involved in RAB18 recruitment at the endoplasmic reticulum (ER) membrane where it maintains proper ER structure. Required for normal eye and brain development. May participate in neurodevelopmental processes such as proliferation, migration and differentiation before synapse formation, and non-synaptic vesicular release of neurotransmitters. This Homo sapiens (Human) protein is Rab3 GTPase-activating protein catalytic subunit.